We begin with the raw amino-acid sequence, 348 residues long: tRNA pseudouridine synthase D (348 aa).

Residue phenylalanine 26 coordinates substrate. The active-site Nucleophile is aspartate 79. Asparagine 128 contributes to the substrate binding site. Positions 154-302 constitute a TRUD domain; that stretch reads GVPNYFGSQR…VDPARRALLL (149 aa). Substrate is bound at residue phenylalanine 328.

This sequence belongs to the pseudouridine synthase TruD family.

The enzyme catalyses uridine(13) in tRNA = pseudouridine(13) in tRNA. Responsible for synthesis of pseudouridine from uracil-13 in transfer RNAs. This chain is tRNA pseudouridine synthase D, found in Serratia proteamaculans (strain 568).